The primary structure comprises 72 residues: Brevinin-2SN4 (72 aa).

The N-terminal stretch at 1–22 is a signal peptide; sequence MFTMKKPMLLLFFLGMISMSLC. Residues 23–40 constitute a propeptide, removed in mature form; sequence QDERGADEDDGGEMTEEE. Cys-66 and Cys-72 are oxidised to a cystine.

This sequence belongs to the frog skin active peptide (FSAP) family. Brevinin subfamily. In terms of tissue distribution, expressed by the skin glands.

Its subcellular location is the secreted. Its function is as follows. Antimicrobial peptide. Active against a variety of Gram-negative and Gram-positive bacterial strains. Not active against fungi. Shows very weak hemolytic activity against human erythrocytes. This chain is Brevinin-2SN4, found in Sylvirana spinulosa (Fine-spined frog).